Reading from the N-terminus, the 66-residue chain is MPKMKTKSSAKKRFKVTSTGKVMAAQAGKQHGMIKRSNKFLRNARGTSELSAPDSKIVKSYMPYDR.

Belongs to the bacterial ribosomal protein bL35 family.

The protein is Large ribosomal subunit protein bL35 of Jannaschia sp. (strain CCS1).